The following is a 165-amino-acid chain: GTP-dependent dephospho-CoA kinase (165 aa).

GTP is bound by residues Asp-44, Val-45, Asp-63, Lys-65, Glu-115, and Asp-138.

This sequence belongs to the GTP-dependent DPCK family.

It carries out the reaction 3'-dephospho-CoA + GTP = GDP + CoA + H(+). It functions in the pathway cofactor biosynthesis; coenzyme A biosynthesis. Its function is as follows. Catalyzes the GTP-dependent phosphorylation of the 3'-hydroxyl group of dephosphocoenzyme A to form coenzyme A (CoA). The chain is GTP-dependent dephospho-CoA kinase from Picrophilus torridus (strain ATCC 700027 / DSM 9790 / JCM 10055 / NBRC 100828 / KAW 2/3).